Consider the following 102-residue polypeptide: Protein translation factor SUI1 homolog (102 aa).

This sequence belongs to the SUI1 family.

This is Protein translation factor SUI1 homolog from Cenarchaeum symbiosum (strain A).